Reading from the N-terminus, the 493-residue chain is Phospholipid transfer protein (493 aa).

The signal sequence occupies residues 1-17 (MALFGALFLALLAGAHA). Asn-64 carries N-linked (GlcNAc...) (complex) asparagine glycosylation. Asn-94 is a glycosylation site (N-linked (GlcNAc...) asparagine). Residue Asn-117 is glycosylated (N-linked (GlcNAc...) (complex) asparagine). Asn-143 carries N-linked (GlcNAc...) asparagine glycosylation. A disulfide bond links Cys-146 and Cys-185. Asn-245 carries N-linked (GlcNAc...) (complex) asparagine glycosylation. Asn-398 carries an N-linked (GlcNAc...) asparagine glycan.

It belongs to the BPI/LBP/Plunc superfamily. BPI/LBP family. Glycosylation is necessary for secretion and its phospholipid transfer activity. Widely expressed. Highest level of expression in the ovary, thymus and placenta, with moderate levels found in the pancreas, small intestine, testis, lung and prostrate. Low level expression in the kidney, liver and spleen, with very low levels found in the heart, colon, skeletal muscle, leukocytes and brain. Expressed in the cortical neurons.

It is found in the secreted. It localises to the nucleus. It carries out the reaction a 1,2-diacyl-sn-glycero-3-phosphocholine(in) = a 1,2-diacyl-sn-glycero-3-phosphocholine(out). The catalysed reaction is a 1,2-diacyl-sn-glycero-3-phosphoethanolamine(in) = a 1,2-diacyl-sn-glycero-3-phosphoethanolamine(out). It catalyses the reaction a 1,2-diacyl-sn-glycerol(in) = a 1,2-diacyl-sn-glycerol(out). The enzyme catalyses a 1,2-diacyl-sn-glycero-3-phosphate(in) = a 1,2-diacyl-sn-glycero-3-phosphate(out). It carries out the reaction a sphingomyelin(in) = a sphingomyelin(out). The catalysed reaction is a 1,2-diacyl-sn-glycero-3-phospho-(1'-sn-glycerol)(in) = a 1,2-diacyl-sn-glycero-3-phospho-(1'-sn-glycerol)(out). It catalyses the reaction a 1,2-diacyl-sn-glycero-3-phospho-(1D-myo-inositol)(in) = a 1,2-diacyl-sn-glycero-3-phospho-(1D-myo-inositol)(out). The enzyme catalyses 1-hexadecanoyl-2-(5Z,8Z,11Z,14Z-eicosatetraenoyl)-sn-glycero-3-phosphoethanolamine(in) = 1-hexadecanoyl-2-(5Z,8Z,11Z,14Z-eicosatetraenoyl)-sn-glycero-3-phosphoethanolamine(out). It carries out the reaction N-(hexadecanoyl)-sphing-4-enine-1-phosphocholine(in) = N-(hexadecanoyl)-sphing-4-enine-1-phosphocholine(out). The catalysed reaction is 1,2-dihexadecanoyl-sn-glycero-3-phosphocholine(in) = 1,2-dihexadecanoyl-sn-glycero-3-phosphocholine(out). Mediates the transfer of phospholipids and free cholesterol from triglyceride-rich lipoproteins (low density lipoproteins or LDL and very low density lipoproteins or VLDL) into high-density lipoproteins (HDL) as well as the exchange of phospholipids between triglyceride-rich lipoproteins themselves. Facilitates the transfer of a spectrum of different lipid molecules, including diacylglycerol, phosphatidic acid, sphingomyelin, phosphatidylcholine, phosphatidylinositol, phosphatidylglycerol, cerebroside and phosphatidyl ethanolamine. Plays an important role in HDL remodeling which involves modulating the size and composition of HDL. Also plays a key role in the uptake of cholesterol from peripheral cells and tissues that is subsequently transported to the liver for degradation and excretion. Two distinct forms of PLTP exist in plasma: an active form that can transfer phosphatidylcholine from phospholipid vesicles to HDL, and an inactive form that lacks this capability. The polypeptide is Phospholipid transfer protein (PLTP) (Homo sapiens (Human)).